We begin with the raw amino-acid sequence, 616 residues long: Fatty acyl-CoA reductase 2, chloroplastic (616 aa).

The N-terminal 14 residues, 1-14 (MEALFLSSSSSSIV), are a transit peptide targeting the chloroplast. Positions 133-143 (FLITGSTGFLA) match the NAD(P)H-binding motif. Active-site residues include Tyr357 and Lys361.

Belongs to the fatty acyl-CoA reductase family. As to expression, expressed in the tapetum of anthers.

It is found in the plastid. It localises to the chloroplast. The enzyme catalyses a long-chain fatty acyl-CoA + 2 NADPH + 2 H(+) = a long-chain primary fatty alcohol + 2 NADP(+) + CoA. It carries out the reaction hexadecanoyl-CoA + 2 NADPH + 2 H(+) = hexadecan-1-ol + 2 NADP(+) + CoA. It catalyses the reaction hexadecanoyl-[ACP] + 2 NADPH + 2 H(+) = hexadecan-1-ol + holo-[ACP] + 2 NADP(+). Functionally, catalyzes the reduction of fatty acyl-CoA and -ACP (acyl carrier protein) substrates to fatty alcohols. Triggers the accumulation of C16 and C18 fatty alcohols; converts palmitoyl-acyl carrier protein to the corresponding C16:0 alcohol with NAD(P)H as electron donor, but seems inactive toward palmitoyl- or other acyl-coenzyme A. Also triggers the formation of some C16:0 aldehydes. Involved in the synthesis of the lipid component in sporopollenin. Required for exine patterning of pollen grain by mediating the formation of pollen wall substances. The protein is Fatty acyl-CoA reductase 2, chloroplastic of Arabidopsis thaliana (Mouse-ear cress).